Here is a 441-residue protein sequence, read N- to C-terminus: Putative transporter AmpG 1 (441 aa).

12 helical membrane passes run 5–25 (SHLL…MITG), 42–62 (IGIL…APIF), 78–98 (LSWI…FSFL), 104–124 (LVLF…QDTI), 143–163 (GIYI…AIYL), 171–191 (EIYK…IVAA), 249–269 (SGND…LVLY), 297–317 (VGKF…GFIM), 325–345 (SIFL…FLEI), 352–372 (LLFI…TAYI), 390–410 (FLSS…GYMV), and 413–433 (FGWQ…LLIL).

It belongs to the major facilitator superfamily.

Its subcellular location is the cell inner membrane. In Rickettsia felis (strain ATCC VR-1525 / URRWXCal2) (Rickettsia azadi), this protein is Putative transporter AmpG 1 (ampG1).